A 492-amino-acid polypeptide reads, in one-letter code: Katanin p60 ATPase-containing subunit A1 (492 aa).

The segment at 80–186 (STPPKASQQE…ESEPKKFDST (107 aa)) is disordered. Residues 145 to 171 (PNDKGKAVRGREKKDQQNKGKEEKSKS) are compositionally biased toward basic and acidic residues. ATP is bound at residue 250-257 (GPPGTGKT).

The protein belongs to the AAA ATPase family. Katanin p60 subunit A1 subfamily. Can homooligomerize into hexameric rings, which may be promoted by interaction with microtubules. Interacts with KATNB1, which may serve as a targeting subunit.

The protein resides in the cytoplasm. Its subcellular location is the cytoskeleton. It is found in the microtubule organizing center. The protein localises to the centrosome. It localises to the spindle pole. The protein resides in the spindle. It carries out the reaction n ATP + n H2O + a microtubule = n ADP + n phosphate + (n+1) alpha/beta tubulin heterodimers.. Its activity is regulated as follows. ATPase activity is stimulated by microtubules, which promote homooligomerization. ATP-dependent microtubule severing is stimulated by interaction with KATNB1. In terms of biological role, catalytic subunit of a complex which severs microtubules in an ATP-dependent manner. Microtubule severing may promote rapid reorganization of cellular microtubule arrays and the release of microtubules from the centrosome following nucleation. In Gallus gallus (Chicken), this protein is Katanin p60 ATPase-containing subunit A1.